The chain runs to 159 residues: MHPIRKKRLTIVLFLVAGIAIAVGLTTYALRQNINLFYDPTEIAAGNAPVDVRIRAGGMVEEGSVSRDTDSLKVNFRVTDYAASVPVQYEGILPDLFAEGQGVVAMGRLNEQGVFVADQVLAKHDENYMPPEVAEALERSSKGQHKSADVEKAAETTAY.

The Cytoplasmic portion of the chain corresponds to 1 to 8 (MHPIRKKR). The chain crosses the membrane as a helical; Signal-anchor for type II membrane protein span at residues 9–29 (LTIVLFLVAGIAIAVGLTTYA). Residues 30–159 (LRQNINLFYD…VEKAAETTAY (130 aa)) lie on the Periplasmic side of the membrane. 2 residues coordinate heme: His124 and Tyr128. The segment at 135–159 (EALERSSKGQHKSADVEKAAETTAY) is disordered. Over residues 136 to 159 (ALERSSKGQHKSADVEKAAETTAY) the composition is skewed to basic and acidic residues.

It belongs to the CcmE/CycJ family.

Its subcellular location is the cell inner membrane. Its function is as follows. Heme chaperone required for the biogenesis of c-type cytochromes. Transiently binds heme delivered by CcmC and transfers the heme to apo-cytochromes in a process facilitated by CcmF and CcmH. The chain is Cytochrome c-type biogenesis protein CcmE from Marinobacter nauticus (strain ATCC 700491 / DSM 11845 / VT8) (Marinobacter aquaeolei).